The chain runs to 636 residues: Chaperone protein HtpG (636 aa).

Residues 1–349 (MAKHQFQTEV…SEDLPLNVSR (349 aa)) are a; substrate-binding. The tract at residues 350 to 562 (EILQENRILA…ADAQMAAMAH (213 aa)) is b. Residues 563-636 (MFRAMGQAMP…RLSRITAKAL (74 aa)) are c.

This sequence belongs to the heat shock protein 90 family. As to quaternary structure, homodimer.

It localises to the cytoplasm. In terms of biological role, molecular chaperone. Has ATPase activity. In Aliarcobacter butzleri (strain RM4018) (Arcobacter butzleri), this protein is Chaperone protein HtpG.